The sequence spans 119 residues: Immunoglobulin heavy variable 3-49 (119 aa).

A signal peptide spans Met1–Cys19. Positions Glu20–Ser44 are framework-1. One can recognise an Ig-like domain in the interval Glu20–Arg119. Cys41 and Cys117 are oxidised to a cystine. The tract at residues Gly45–Ala52 is complementarity-determining-1. The tract at residues Met53–Phe69 is framework-2. The complementarity-determining-2 stretch occupies residues Ile70–Thr79. Residues Glu80–Cys117 form a framework-3 region. A complementarity-determining-3 region spans residues Thr118–Arg119.

In terms of assembly, immunoglobulins are composed of two identical heavy chains and two identical light chains; disulfide-linked.

Its subcellular location is the secreted. It localises to the cell membrane. V region of the variable domain of immunoglobulin heavy chains that participates in the antigen recognition. Immunoglobulins, also known as antibodies, are membrane-bound or secreted glycoproteins produced by B lymphocytes. In the recognition phase of humoral immunity, the membrane-bound immunoglobulins serve as receptors which, upon binding of a specific antigen, trigger the clonal expansion and differentiation of B lymphocytes into immunoglobulins-secreting plasma cells. Secreted immunoglobulins mediate the effector phase of humoral immunity, which results in the elimination of bound antigens. The antigen binding site is formed by the variable domain of one heavy chain, together with that of its associated light chain. Thus, each immunoglobulin has two antigen binding sites with remarkable affinity for a particular antigen. The variable domains are assembled by a process called V-(D)-J rearrangement and can then be subjected to somatic hypermutations which, after exposure to antigen and selection, allow affinity maturation for a particular antigen. The chain is Immunoglobulin heavy variable 3-49 from Homo sapiens (Human).